A 92-amino-acid chain; its full sequence is Small ribosomal subunit protein uS19c (92 aa).

It belongs to the universal ribosomal protein uS19 family.

The protein localises to the plastid. It is found in the chloroplast. In terms of biological role, protein S19 forms a complex with S13 that binds strongly to the 16S ribosomal RNA. The polypeptide is Small ribosomal subunit protein uS19c (Physcomitrium patens (Spreading-leaved earth moss)).